A 337-amino-acid chain; its full sequence is Probable deoxyhypusine synthase (337 aa).

Lys308 acts as the Nucleophile in catalysis.

Belongs to the deoxyhypusine synthase family. NAD(+) is required as a cofactor.

It catalyses the reaction [eIF5A protein]-L-lysine + spermidine = [eIF5A protein]-deoxyhypusine + propane-1,3-diamine. It participates in protein modification; eIF5A hypusination. Functionally, catalyzes the NAD-dependent oxidative cleavage of spermidine and the subsequent transfer of the butylamine moiety of spermidine to the epsilon-amino group of a specific lysine residue of the eIF-5A precursor protein to form the intermediate deoxyhypusine residue. The protein is Probable deoxyhypusine synthase of Thermococcus kodakarensis (strain ATCC BAA-918 / JCM 12380 / KOD1) (Pyrococcus kodakaraensis (strain KOD1)).